Reading from the N-terminus, the 490-residue chain is Betaine aldehyde dehydrogenase (490 aa).

Residues T26, I27, and D93 each coordinate K(+). G150–W152 lines the NAD(+) pocket. The active-site Charge relay system is K162. K176–E179 lines the NAD(+) pocket. V180 lines the K(+) pocket. Position 230–233 (G230–S233) interacts with NAD(+). Residue L246 coordinates K(+). E252 functions as the Proton acceptor in the catalytic mechanism. Residues G254, C286, and E387 each coordinate NAD(+). C286 (nucleophile) is an active-site residue. C286 is modified (cysteine sulfenic acid (-SOH)). 2 residues coordinate K(+): K457 and G460. E464 (charge relay system) is an active-site residue.

Belongs to the aldehyde dehydrogenase family. Dimer of dimers. It depends on K(+) as a cofactor.

The catalysed reaction is betaine aldehyde + NAD(+) + H2O = glycine betaine + NADH + 2 H(+). The protein operates within amine and polyamine biosynthesis; betaine biosynthesis via choline pathway; betaine from betaine aldehyde: step 1/1. In terms of biological role, involved in the biosynthesis of the osmoprotectant glycine betaine. Catalyzes the irreversible oxidation of betaine aldehyde to the corresponding acid. This Escherichia coli O9:H4 (strain HS) protein is Betaine aldehyde dehydrogenase.